A 206-amino-acid chain; its full sequence is Endoplasmic reticulum transmembrane protein YET-like (206 aa).

Topologically, residues 1 to 2 are lumenal; sequence ME. Residues 3–23 form a helical membrane-spanning segment; that stretch reads FLMTLVFLVLLVEIVFCTFFM. Topologically, residues 24–46 are cytoplasmic; sequence LPVSMHLRKNVYNKLDKLFGGQN. A helical transmembrane segment spans residues 47 to 67; it reads AKIFLKVLALLVIIVFCDSIV. Residues 68–101 lie on the Lumenal side of the membrane; that stretch reads NSYNINKKLHTPELTGAKFDRQNEYTRMFRYQRN. Residues 102–122 traverse the membrane as a helical segment; it reads SYICGFCLYLFFLIYRSQGII. Topologically, residues 123–206 are cytoplasmic; sequence SQLSNVEASK…KKPKTQKKDD (84 aa). The stretch at 140 to 198 forms a coiled coil; it reads KNNLNTVETLLSENEKLKTEIKDLKKMEKEHKAMKSQAENTTKEYLKLQEEYNQLLGKK. The short motif at 203–206 is the Di-lysine motif element; the sequence is KKDD.

Belongs to the BCAP29/BCAP31 family.

The protein localises to the endoplasmic reticulum membrane. In terms of biological role, may play a role in anterograde transport of membrane proteins from the endoplasmic reticulum to the Golgi. This is Endoplasmic reticulum transmembrane protein YET-like from Dictyostelium discoideum (Social amoeba).